The primary structure comprises 556 residues: Undecaprenyl phosphate-alpha-4-amino-4-deoxy-L-arabinose arabinosyl transferase (556 aa).

11 consecutive transmembrane segments (helical) span residues 5–25 (MIKL…LLPL), 88–108 (FASV…ALLL), 116–136 (LLAA…TYSV), 179–199 (FMTK…PVAL), 207–227 (LLLF…PWAL), 258–278 (APFW…LALL), 296–316 (FLLL…KGKL), 319–339 (YILP…SGLA), 355–375 (LAFG…IIMP), 384–404 (LTIV…AVSL), and 410–430 (WGYL…GSIP).

It belongs to the glycosyltransferase 83 family.

It localises to the cell inner membrane. It catalyses the reaction 4-amino-4-deoxy-alpha-L-arabinopyranosyl di-trans,octa-cis-undecaprenyl phosphate + lipid IVA = lipid IIA + di-trans,octa-cis-undecaprenyl phosphate.. The protein operates within lipopolysaccharide metabolism; 4-amino-4-deoxy-beta-L-arabinose-lipid A biosynthesis. Catalyzes the transfer of the L-Ara4N moiety of the glycolipid undecaprenyl phosphate-alpha-L-Ara4N to lipid A. The modified arabinose is attached to lipid A and is required for resistance to polymyxin and cationic antimicrobial peptides. In Pectobacterium carotovorum subsp. carotovorum (strain PC1), this protein is Undecaprenyl phosphate-alpha-4-amino-4-deoxy-L-arabinose arabinosyl transferase.